Consider the following 341-residue polypeptide: Anthranilate phosphoribosyltransferase (341 aa).

5-phospho-alpha-D-ribose 1-diphosphate is bound by residues Gly79, 82–83, Thr87, 89–92, 107–115, and Ser119; these read GD, NIST, and KHGGRSVSS. Position 79 (Gly79) interacts with anthranilate. Residue Ser91 coordinates Mg(2+). Position 165 (Arg165) interacts with anthranilate. Mg(2+)-binding residues include Asp224 and Glu225.

Belongs to the anthranilate phosphoribosyltransferase family. As to quaternary structure, homodimer. Mg(2+) serves as cofactor.

It catalyses the reaction N-(5-phospho-beta-D-ribosyl)anthranilate + diphosphate = 5-phospho-alpha-D-ribose 1-diphosphate + anthranilate. It participates in amino-acid biosynthesis; L-tryptophan biosynthesis; L-tryptophan from chorismate: step 2/5. Its function is as follows. Catalyzes the transfer of the phosphoribosyl group of 5-phosphorylribose-1-pyrophosphate (PRPP) to anthranilate to yield N-(5'-phosphoribosyl)-anthranilate (PRA). The protein is Anthranilate phosphoribosyltransferase of Ruminiclostridium cellulolyticum (strain ATCC 35319 / DSM 5812 / JCM 6584 / H10) (Clostridium cellulolyticum).